The primary structure comprises 466 residues: Methylenetetrahydrofolate--tRNA-(uracil-5-)-methyltransferase TrmFO (466 aa).

14–19 (GGGLAG) lines the FAD pocket.

Belongs to the MnmG family. TrmFO subfamily. Requires FAD as cofactor.

It localises to the cytoplasm. The enzyme catalyses uridine(54) in tRNA + (6R)-5,10-methylene-5,6,7,8-tetrahydrofolate + NADH + H(+) = 5-methyluridine(54) in tRNA + (6S)-5,6,7,8-tetrahydrofolate + NAD(+). The catalysed reaction is uridine(54) in tRNA + (6R)-5,10-methylene-5,6,7,8-tetrahydrofolate + NADPH + H(+) = 5-methyluridine(54) in tRNA + (6S)-5,6,7,8-tetrahydrofolate + NADP(+). In terms of biological role, catalyzes the folate-dependent formation of 5-methyl-uridine at position 54 (M-5-U54) in all tRNAs. This Brucella canis (strain ATCC 23365 / NCTC 10854 / RM-666) protein is Methylenetetrahydrofolate--tRNA-(uracil-5-)-methyltransferase TrmFO.